Consider the following 1160-residue polypeptide: Protein translocase subunit SecA (1160 aa).

ATP-binding positions include Gln-162 and 180-184; that span reads GEGKT. The tract at residues 342-362 is disordered; sequence LLEEKEEAEEEGDSRRAQELE. The span at 344-353 shows a compositional bias: acidic residues; it reads EEKEEAEEEG. Asp-726 lines the ATP pocket. The segment at 1060–1134 is disordered; that stretch reads EVQTEGQGPR…RNEYVTVRNN (75 aa). Residues 1074–1083 are compositionally biased toward polar residues; the sequence is QRNAQTQHDS. A compositionally biased stretch (basic and acidic residues) spans 1104–1115; the sequence is AAERDPTVEEKQ.

It belongs to the SecA family. In terms of assembly, monomer and homodimer. Part of the essential Sec protein translocation apparatus which comprises SecA, SecYEG and auxiliary proteins SecDF. Other proteins may also be involved.

Its subcellular location is the cell inner membrane. The protein localises to the cytoplasm. It carries out the reaction ATP + H2O + cellular proteinSide 1 = ADP + phosphate + cellular proteinSide 2.. Part of the Sec protein translocase complex. Interacts with the SecYEG preprotein conducting channel. Has a central role in coupling the hydrolysis of ATP to the transfer of proteins into and across the cell membrane, serving as an ATP-driven molecular motor driving the stepwise translocation of polypeptide chains across the membrane. This is Protein translocase subunit SecA from Salinibacter ruber (strain DSM 13855 / M31).